A 186-amino-acid chain; its full sequence is dITP/XTP pyrophosphatase (186 aa).

A substrate-binding site is contributed by 7-12 (TSNPGK). 2 residues coordinate Mg(2+): glutamate 36 and aspartate 65. Aspartate 65 (proton acceptor) is an active-site residue. Substrate is bound by residues serine 66, 140–143 (FGYD), lysine 163, and 168–169 (HR).

It belongs to the HAM1 NTPase family. Homodimer. The cofactor is Mg(2+). Mn(2+) is required as a cofactor.

The enzyme catalyses XTP + H2O = XMP + diphosphate + H(+). The catalysed reaction is dITP + H2O = dIMP + diphosphate + H(+). It carries out the reaction ITP + H2O = IMP + diphosphate + H(+). In terms of biological role, pyrophosphatase that catalyzes the hydrolysis of nucleoside triphosphates to their monophosphate derivatives, with a high preference for the non-canonical purine nucleotides XTP (xanthosine triphosphate), dITP (deoxyinosine triphosphate) and ITP. Seems to function as a house-cleaning enzyme that removes non-canonical purine nucleotides from the nucleotide pool, thus preventing their incorporation into DNA/RNA and avoiding chromosomal lesions. The polypeptide is dITP/XTP pyrophosphatase (Pyrococcus horikoshii (strain ATCC 700860 / DSM 12428 / JCM 9974 / NBRC 100139 / OT-3)).